The primary structure comprises 124 residues: Small ribosomal subunit protein uS12 (124 aa).

D89 is subject to 3-methylthioaspartic acid.

This sequence belongs to the universal ribosomal protein uS12 family. In terms of assembly, part of the 30S ribosomal subunit. Contacts proteins S8 and S17. May interact with IF1 in the 30S initiation complex.

With S4 and S5 plays an important role in translational accuracy. In terms of biological role, interacts with and stabilizes bases of the 16S rRNA that are involved in tRNA selection in the A site and with the mRNA backbone. Located at the interface of the 30S and 50S subunits, it traverses the body of the 30S subunit contacting proteins on the other side and probably holding the rRNA structure together. The combined cluster of proteins S8, S12 and S17 appears to hold together the shoulder and platform of the 30S subunit. The chain is Small ribosomal subunit protein uS12 from Sodalis glossinidius (strain morsitans).